Consider the following 638-residue polypeptide: MAKVIGIDLGTTNSCIAIMDGKEPKVIENAEGARTTPSIVAISGDGERLVGQPAKRQAVTNPENTIFAVKRLIGRRYDDPVTEKDKKLVPYKIVKGDNGDAWVEAGGKKQSPSQISAMILQKMKETAEAYLGEKVEKAVITVPAYFNDAQRQATKDAGKIAGLEVLRIINEPTAAALAYGLDKKDGKTIAVYDLGGGTFDISVLEIGDGVFEVKSTNGDTFLGGEDFDMRLVEYLAAEFKKEQGIDLKNDKLALQRLKEAAEKAKIELSSTTQTEINLPFITADATGPKHLTLKLTRAKFESLVEDLVQRTIDPCKAALKDAGLKAGEIDEVVLVGGMTRMPKIQEIVKQFFGKEPHKGVNPDEVVALGAAIQAGVLQGDVKDVLLLDVTPLSLGIETLGGVFTRLIERNTTIPTKKSQVFSTAEDSQSAVTIRVFQGEREMAADNKALGQFDLVGIPPAPRGVPQIEVTFDIDANGIVNVSAKDKGTGKEHQIRIQASGGLSDADIEKMVKDAEANAETDKKRRAVVEARNQAEALVHSSEKSLKEYGDKVSEAERTAISDAIAALKTAAEGDDAADIEAKSQALAEASMKLGQAMYEASQKEAAEADAKADAAKDSDVVDADFEEIDEDDDKKKSA.

Position 198 is a phosphothreonine; by autocatalysis (threonine 198). Residues 598-638 (YEASQKEAAEADAKADAAKDSDVVDADFEEIDEDDDKKKSA) form a disordered region. A compositionally biased stretch (basic and acidic residues) spans 601-619 (SQKEAAEADAKADAAKDSD). Acidic residues predominate over residues 620–632 (VVDADFEEIDEDD).

This sequence belongs to the heat shock protein 70 family.

In terms of biological role, acts as a chaperone. The chain is Chaperone protein DnaK from Mesorhizobium japonicum (strain LMG 29417 / CECT 9101 / MAFF 303099) (Mesorhizobium loti (strain MAFF 303099)).